A 657-amino-acid polypeptide reads, in one-letter code: tRNA 5-methylaminomethyl-2-thiouridine biosynthesis bifunctional protein MnmC (657 aa).

Positions 1–235 (MSDAHNAQLD…KREMLAGPFQ (235 aa)) are tRNA (mnm(5)s(2)U34)-methyltransferase. Residues 261 to 657 (IGAGLAGCAT…QLIRGTGSPT (397 aa)) form an FAD-dependent cmnm(5)s(2)U34 oxidoreductase region.

This sequence in the N-terminal section; belongs to the methyltransferase superfamily. tRNA (mnm(5)s(2)U34)-methyltransferase family. In the C-terminal section; belongs to the DAO family. The cofactor is FAD.

The protein resides in the cytoplasm. It catalyses the reaction 5-aminomethyl-2-thiouridine(34) in tRNA + S-adenosyl-L-methionine = 5-methylaminomethyl-2-thiouridine(34) in tRNA + S-adenosyl-L-homocysteine + H(+). Its function is as follows. Catalyzes the last two steps in the biosynthesis of 5-methylaminomethyl-2-thiouridine (mnm(5)s(2)U) at the wobble position (U34) in tRNA. Catalyzes the FAD-dependent demodification of cmnm(5)s(2)U34 to nm(5)s(2)U34, followed by the transfer of a methyl group from S-adenosyl-L-methionine to nm(5)s(2)U34, to form mnm(5)s(2)U34. This Ectopseudomonas mendocina (strain ymp) (Pseudomonas mendocina) protein is tRNA 5-methylaminomethyl-2-thiouridine biosynthesis bifunctional protein MnmC.